The chain runs to 76 residues: Esculentin-2-ALb (76 aa).

The first 22 residues, 1 to 22 (MFTMKKSLLLLFFLGTISLSLC), serve as a signal peptide directing secretion. Positions 23–39 (EEERSADEDDGEKGVKR) are excised as a propeptide. An intrachain disulfide couples cysteine 70 to cysteine 76.

As to expression, expressed by the skin glands.

Its subcellular location is the secreted. Functionally, antimicrobial peptide with activity against Gram-positive and Gram-negative bacteria and against fungi. Has been tested against S.aureus (MIC=1.25 ug/mL), B.pumilus (MIC=2.5 ug/mL), B.cereus (MIC=7.5 ug/mL), E.coli (MIC=12.5 ug/mL), B.dysenteriae (MIC=7.5 ug/mL), A.cacoaceticus (MIC=12.5 ug/mL), P.aeruginosa (MIC=50.0 ug/mL) and C.albicans (MIC=2.5 ug/mL). Also shows a weak hemolytic activity. In Amolops loloensis (Lolokou Sucker Frog), this protein is Esculentin-2-ALb.